The primary structure comprises 490 residues: Cytochrome P450 2C19 (490 aa).

Residue C435 coordinates heme.

This sequence belongs to the cytochrome P450 family. Heme serves as cofactor.

It localises to the endoplasmic reticulum membrane. Its subcellular location is the microsome membrane. It catalyses the reaction an organic molecule + reduced [NADPH--hemoprotein reductase] + O2 = an alcohol + oxidized [NADPH--hemoprotein reductase] + H2O + H(+). It carries out the reaction (5Z,8Z,11Z)-eicosatrienoate + reduced [NADPH--hemoprotein reductase] + O2 = 19-hydroxy-(5Z,8Z,11Z)-eicosatrienoate + oxidized [NADPH--hemoprotein reductase] + H2O + H(+). The enzyme catalyses (5Z,8Z,11Z,14Z)-eicosatetraenoate + reduced [NADPH--hemoprotein reductase] + O2 = 19-hydroxy-(5Z,8Z,11Z,14Z)-eicosatetraenoate + oxidized [NADPH--hemoprotein reductase] + H2O + H(+). The catalysed reaction is (5Z,8Z,11Z,14Z,17Z)-eicosapentaenoate + reduced [NADPH--hemoprotein reductase] + O2 = 19-hydroxy-(5Z,8Z,11Z,14Z,17Z)-eicosapentaenoate + oxidized [NADPH--hemoprotein reductase] + H2O + H(+). It catalyses the reaction (4Z,7Z,10Z,13Z,16Z,19Z)-docosahexaenoate + reduced [NADPH--hemoprotein reductase] + O2 = 21-hydroxy-(4Z,7Z,10Z,13Z,16Z,19Z)-docosahexaenoate + oxidized [NADPH--hemoprotein reductase] + H2O + H(+). It carries out the reaction (5Z,8Z,11Z,14Z)-eicosatetraenoate + reduced [NADPH--hemoprotein reductase] + O2 = (8R,9S)-epoxy-(5Z,11Z,14Z)-eicosatrienoate + oxidized [NADPH--hemoprotein reductase] + H2O + H(+). The enzyme catalyses (5Z,8Z,11Z,14Z)-eicosatetraenoate + reduced [NADPH--hemoprotein reductase] + O2 = (11R,12S)-epoxy-(5Z,8Z,14Z)-eicosatrienoate + oxidized [NADPH--hemoprotein reductase] + H2O + H(+). The catalysed reaction is (5Z,8Z,11Z,14Z)-eicosatetraenoate + reduced [NADPH--hemoprotein reductase] + O2 = (11S,12R)-epoxy-(5Z,8Z,14Z)-eicosatrienoate + oxidized [NADPH--hemoprotein reductase] + H2O + H(+). It catalyses the reaction (5Z,8Z,11Z,14Z)-eicosatetraenoate + reduced [NADPH--hemoprotein reductase] + O2 = (14R,15S)-epoxy-(5Z,8Z,11Z)-eicosatrienoate + oxidized [NADPH--hemoprotein reductase] + H2O + H(+). It carries out the reaction (5Z,8Z,11Z,14Z,17Z)-eicosapentaenoate + reduced [NADPH--hemoprotein reductase] + O2 = (17R,18S)-epoxy-(5Z,8Z,11Z,14Z)-eicosatetraenoate + oxidized [NADPH--hemoprotein reductase] + H2O + H(+). The enzyme catalyses (4Z,7Z,10Z,13Z,16Z,19Z)-docosahexaenoate + reduced [NADPH--hemoprotein reductase] + O2 = (19R,20S)-epoxy-(4Z,7Z,10Z,13Z,16Z)-docosapentaenoate + oxidized [NADPH--hemoprotein reductase] + H2O + H(+). The catalysed reaction is (4Z,7Z,10Z,13Z,16Z,19Z)-docosahexaenoate + reduced [NADPH--hemoprotein reductase] + O2 = (19S,20R)-epoxy-(4Z,7Z,10Z,13Z,16Z)-docosapentaenoate + oxidized [NADPH--hemoprotein reductase] + H2O + H(+). It catalyses the reaction (4R)-limonene + reduced [NADPH--hemoprotein reductase] + O2 = (1R,5S)-carveol + oxidized [NADPH--hemoprotein reductase] + H2O + H(+). It carries out the reaction (4S)-limonene + reduced [NADPH--hemoprotein reductase] + O2 = (1S,5R)-carveol + oxidized [NADPH--hemoprotein reductase] + H2O + H(+). The enzyme catalyses (4S)-limonene + reduced [NADPH--hemoprotein reductase] + O2 = (4S)-perillyl alcohol + oxidized [NADPH--hemoprotein reductase] + H2O + H(+). The catalysed reaction is fenbendazole + reduced [NADPH--hemoprotein reductase] + O2 = 4'-hydroxyfenbendazole + oxidized [NADPH--hemoprotein reductase] + H2O + H(+). The protein operates within lipid metabolism; fatty acid metabolism. It functions in the pathway terpene metabolism; (4R)-limonene degradation. Functionally, a cytochrome P450 monooxygenase involved in the metabolism of polyunsaturated fatty acids (PUFA). Mechanistically, uses molecular oxygen inserting one oxygen atom into a substrate, and reducing the second into a water molecule, with two electrons provided by NADPH via cytochrome P450 reductase (NADPH--hemoprotein reductase). Catalyzes the hydroxylation of carbon-hydrogen bonds. Hydroxylates PUFA specifically at the omega-1 position. Catalyzes the epoxidation of double bonds of PUFA. Also metabolizes plant monoterpenes such as limonene. Oxygenates (R)- and (S)-limonene to produce carveol and perillyl alcohol. Responsible for the metabolism of a number of therapeutic agents such as the anticonvulsant drug S-mephenytoin, omeprazole, proguanil, certain barbiturates, diazepam, propranolol, citalopram and imipramine. Hydroxylates fenbendazole at the 4' position. The protein is Cytochrome P450 2C19 (CYP2C19) of Homo sapiens (Human).